We begin with the raw amino-acid sequence, 212 residues long: Large ribosomal subunit protein uL4 (212 aa).

It belongs to the universal ribosomal protein uL4 family. Part of the 50S ribosomal subunit.

Functionally, one of the primary rRNA binding proteins, this protein initially binds near the 5'-end of the 23S rRNA. It is important during the early stages of 50S assembly. It makes multiple contacts with different domains of the 23S rRNA in the assembled 50S subunit and ribosome. In terms of biological role, forms part of the polypeptide exit tunnel. This chain is Large ribosomal subunit protein uL4, found in Caulobacter vibrioides (strain ATCC 19089 / CIP 103742 / CB 15) (Caulobacter crescentus).